Here is a 385-residue protein sequence, read N- to C-terminus: MEKLILVKYAPEIFLKGLNRNKFEKRLRDNIGKKLEGIKIEFIHDSGRYFIKTNEINESIKRLSNVFGVSEVAVVDVVEIDMDSIKKSSLEKLIEAEGKTFKVSTNRANKNFEGNSTDISRDIGAYILSNYNDEMNVDVKTPDILINVEIRNKNAYVWSNKDITKGVAGLPYGMNGSTMLMLSGGIDSPVAGYLMAKRGVELNCVYYHSHPYTSERAKDKVKDLAKILASYTEKINLYVVPFTEIQMAILDKCREDELTIIMRRFMMRVACKIAEEKGIQSVTSGESIGQVASQTMEGLIVSNDCADRPVFRPLIAMDKTDIMDIARKIETYETSILPYEDCCTIFVPKHPKTKPRVDSIREEEKKLNIDELVRKAIDEMENIVY.

Positions 57–161 constitute a THUMP domain; the sequence is NESIKRLSNV…NKNAYVWSNK (105 aa). ATP is bound by residues 181 to 182, 206 to 207, arginine 263, glycine 285, and glutamine 294; these read ML and YY.

Belongs to the ThiI family.

It is found in the cytoplasm. It carries out the reaction [ThiI sulfur-carrier protein]-S-sulfanyl-L-cysteine + a uridine in tRNA + 2 reduced [2Fe-2S]-[ferredoxin] + ATP + H(+) = [ThiI sulfur-carrier protein]-L-cysteine + a 4-thiouridine in tRNA + 2 oxidized [2Fe-2S]-[ferredoxin] + AMP + diphosphate. It catalyses the reaction [ThiS sulfur-carrier protein]-C-terminal Gly-Gly-AMP + S-sulfanyl-L-cysteinyl-[cysteine desulfurase] + AH2 = [ThiS sulfur-carrier protein]-C-terminal-Gly-aminoethanethioate + L-cysteinyl-[cysteine desulfurase] + A + AMP + 2 H(+). Its pathway is cofactor biosynthesis; thiamine diphosphate biosynthesis. Functionally, catalyzes the ATP-dependent transfer of a sulfur to tRNA to produce 4-thiouridine in position 8 of tRNAs, which functions as a near-UV photosensor. Also catalyzes the transfer of sulfur to the sulfur carrier protein ThiS, forming ThiS-thiocarboxylate. This is a step in the synthesis of thiazole, in the thiamine biosynthesis pathway. The sulfur is donated as persulfide by IscS. This chain is Probable tRNA sulfurtransferase, found in Clostridium botulinum (strain Alaska E43 / Type E3).